We begin with the raw amino-acid sequence, 348 residues long: Nicotinate-nucleotide--dimethylbenzimidazole phosphoribosyltransferase (348 aa).

Glu-315 acts as the Proton acceptor in catalysis.

The protein belongs to the CobT family.

It carries out the reaction 5,6-dimethylbenzimidazole + nicotinate beta-D-ribonucleotide = alpha-ribazole 5'-phosphate + nicotinate + H(+). The protein operates within nucleoside biosynthesis; alpha-ribazole biosynthesis; alpha-ribazole from 5,6-dimethylbenzimidazole: step 1/2. Functionally, catalyzes the synthesis of alpha-ribazole-5'-phosphate from nicotinate mononucleotide (NAMN) and 5,6-dimethylbenzimidazole (DMB). The sequence is that of Nicotinate-nucleotide--dimethylbenzimidazole phosphoribosyltransferase from Dechloromonas aromatica (strain RCB).